We begin with the raw amino-acid sequence, 428 residues long: Enolase (428 aa).

A (2R)-2-phosphoglycerate-binding site is contributed by glutamine 163. Residue glutamate 205 is the Proton donor of the active site. The Mg(2+) site is built by aspartate 242, glutamate 285, and aspartate 312. The (2R)-2-phosphoglycerate site is built by lysine 337, arginine 366, serine 367, and lysine 388. The Proton acceptor role is filled by lysine 337.

It belongs to the enolase family. Requires Mg(2+) as cofactor.

It localises to the cytoplasm. The protein localises to the secreted. It is found in the cell surface. The catalysed reaction is (2R)-2-phosphoglycerate = phosphoenolpyruvate + H2O. It functions in the pathway carbohydrate degradation; glycolysis; pyruvate from D-glyceraldehyde 3-phosphate: step 4/5. Catalyzes the reversible conversion of 2-phosphoglycerate (2-PG) into phosphoenolpyruvate (PEP). It is essential for the degradation of carbohydrates via glycolysis. The polypeptide is Enolase (Persephonella marina (strain DSM 14350 / EX-H1)).